The chain runs to 310 residues: UPF0324 membrane protein GSU2818 (310 aa).

9 helical membrane-spanning segments follow: residues 11–33, 53–72, 79–97, 107–129, 136–158, 193–215, 227–244, 254–273, and 286–308; these read FTILLALCATPWVGTAQALVMGI, MLLQASVVGLGFGLSLGEVI, IWYSVIGISCTLLVGYGLG, SALISFGTAICGGSAIAAMAPVL, TAVALATVFTLNSAALLLFPLVG, ALAIGTTVKLTRAIWIAPVVMAA, IPLFIIGFLGAAAIRTLL, LAGVAKQCLVVTLFLVGAGL, and LVQAVSLWVLVSALTLVALKLPW.

It belongs to the UPF0324 family.

It localises to the cell membrane. The polypeptide is UPF0324 membrane protein GSU2818 (Geobacter sulfurreducens (strain ATCC 51573 / DSM 12127 / PCA)).